The chain runs to 151 residues: Small ribosomal subunit protein uS19 (151 aa).

This sequence belongs to the universal ribosomal protein uS19 family.

Functionally, protein S19 forms a complex with S13 that binds strongly to the 16S ribosomal RNA. This Thermoplasma acidophilum (strain ATCC 25905 / DSM 1728 / JCM 9062 / NBRC 15155 / AMRC-C165) protein is Small ribosomal subunit protein uS19 (rps19).